The following is a 223-amino-acid chain: NAD(P)H-hydrate epimerase (223 aa).

The 203-residue stretch at 9 to 211 (AIKLDEELMG…ELKDKLHLIL (203 aa)) folds into the YjeF N-terminal domain. Residue 60–64 (NNGGD) participates in (6S)-NADPHX binding. K(+)-binding residues include asparagine 61 and aspartate 120. (6S)-NADPHX-binding positions include 124–130 (GFSFKGP) and aspartate 153. Serine 156 contacts K(+).

The protein belongs to the NnrE/AIBP family. K(+) is required as a cofactor.

It catalyses the reaction (6R)-NADHX = (6S)-NADHX. The enzyme catalyses (6R)-NADPHX = (6S)-NADPHX. Its function is as follows. Catalyzes the epimerization of the S- and R-forms of NAD(P)HX, a damaged form of NAD(P)H that is a result of enzymatic or heat-dependent hydration. This is a prerequisite for the S-specific NAD(P)H-hydrate dehydratase to allow the repair of both epimers of NAD(P)HX. In Entamoeba histolytica (strain ATCC 30459 / HM-1:IMSS / ABRM), this protein is NAD(P)H-hydrate epimerase.